Consider the following 234-residue polypeptide: Kappa-casein (234 aa).

An N-terminal signal peptide occupies residues 1 to 21 (MMKSFLLVVNIVALTLPFLAA). A run of 3 repeats spans residues 127 to 153 (LGKATILSTDAIAAPEQTPVSAAQPTV), 154 to 179 (SAGDTPEVSSQFIDTPDTSVLAEEAR), and 180 to 207 (ESPEDTPEISEFINAPDTAVPSEEPRES). The 3 X 27 AA tandem repeats stretch occupies residues 127-207 (LGKATILSTD…AVPSEEPRES (81 aa)). The interval 143–234 (QTPVSAAQPT…STGPAIASMA (92 aa)) is disordered. Thr-144 is a glycosylation site (O-linked (GalNAc...) threonine). Residues 144 to 171 (TPVSAAQPTVSAGDTPEVSSQFIDTPDT) show a composition bias toward polar residues. The residue at position 158 (Thr-158) is a Phosphothreonine. Residue Ser-162 is modified to Phosphoserine; alternate. Ser-162 carries an O-linked (GalNAc...) serine; alternate glycan.

This sequence belongs to the kappa-casein family. In terms of tissue distribution, mammary gland specific. Secreted in milk.

It is found in the secreted. Kappa-casein stabilizes micelle formation, preventing casein precipitation in milk. This chain is Kappa-casein (CSN3), found in Cavia porcellus (Guinea pig).